We begin with the raw amino-acid sequence, 345 residues long: NADH-ubiquinone oxidoreductase chain 2 (345 aa).

A run of 9 helical transmembrane segments spans residues 25–45, 60–80, 99–119, 149–171, 178–198, 199–219, 242–262, 282–302, and 324–344; these read HWLLAWMGLEINTLAIIPLMT, FLTQAAASALLLFSSLNNAWL, TIAICMKLGLAPFHFWLPEVL, LNTPLLLTLGLTSTLIGGWGGLN, ILAFSSIAHLGWMISILPFSP, QLMILNLTIYLIMTSTMFLVL, ALSLLTLLSLGGLPPLSGFVP, LALSALLSLFFYLRLTYIVTL, and LLLSIALILSSFIIPISPLTL.

It belongs to the complex I subunit 2 family. In terms of assembly, core subunit of respiratory chain NADH dehydrogenase (Complex I) which is composed of 45 different subunits.

The protein resides in the mitochondrion inner membrane. The enzyme catalyses a ubiquinone + NADH + 5 H(+)(in) = a ubiquinol + NAD(+) + 4 H(+)(out). Its function is as follows. Core subunit of the mitochondrial membrane respiratory chain NADH dehydrogenase (Complex I) which catalyzes electron transfer from NADH through the respiratory chain, using ubiquinone as an electron acceptor. Essential for the catalytic activity and assembly of complex I. This is NADH-ubiquinone oxidoreductase chain 2 (mt-nd2) from Xenopus laevis (African clawed frog).